A 47-amino-acid chain; its full sequence is Delta-ctenitoxin-Pr2d (47 aa).

5 cysteine pairs are disulfide-bonded: Cys3/Cys17, Cys10/Cys23, Cys14/Cys46, Cys16/Cys31, and Cys25/Cys29.

In terms of tissue distribution, expressed by the venom gland.

It localises to the secreted. Blocks voltage-gated sodium channels (Nav). Causes rapid general spastic paralysis and death when injected in mice at dose levels of less than 2 ug per mouse. In Phoneutria reidyi (Brazilian Amazonian armed spider), this protein is Delta-ctenitoxin-Pr2d.